A 212-amino-acid polypeptide reads, in one-letter code: Large ribosomal subunit protein uL3 (212 aa).

Q153 carries the N5-methylglutamine modification.

This sequence belongs to the universal ribosomal protein uL3 family. In terms of assembly, part of the 50S ribosomal subunit. Forms a cluster with proteins L14 and L19. Post-translationally, methylated by PrmB.

Functionally, one of the primary rRNA binding proteins, it binds directly near the 3'-end of the 23S rRNA, where it nucleates assembly of the 50S subunit. This chain is Large ribosomal subunit protein uL3, found in Shewanella frigidimarina (strain NCIMB 400).